The following is a 620-amino-acid chain: E3 ubiquitin-protein ligase DTX1 (620 aa).

WWE domains follow at residues 14-94 (GLGF…PVRR) and 95-171 (NFYD…RLRR). 3 disordered regions span residues 221–248 (SQRRKAPPAPPLPPPPPPGGPPGALAVR), 262–313 (PAAG…SIPP), and 361–391 (PPVSKSDVKPVPGVPGVCRKTKKKHLKKSKN). Pro residues-rich tracts occupy residues 227 to 241 (PPAPPLPPPPPPGGP) and 268 to 280 (EPAPPPGAPPRSP). The SH3-binding motif lies at 230-233 (PPLP). Polar residues predominate over residues 291–307 (QNNLNRPGPQRTTSVSA). The segment covering 379–389 (RKTKKKHLKKS) has biased composition (basic residues). The RING-type zinc-finger motif lies at 411–472 (CTICMERLVT…DGSLQCPTCK (62 aa)).

This sequence belongs to the Deltex family. Homodimer. May form a heterodimer with other members of the Deltex family. Interacts with NOTCH1 via its N-terminal region and EIF3F, the interaction is required for NOTCH1 deubiquitination. Interacts with EP300. Forms a heterodimer with BBAP; the heterodimerization leading to an increase of in vitro ubiquitin ligase activity. Interacts with ITCH. Ubiquitinated; undergoes 'Lys-29'-linked polyubiquitination catalyzed by ITCH. Widely expressed. Strongly expressed in blood vessel. Also expressed in embryonic nervous system, pancreas, lung, adrenal gland, digestive tube and muscles. Expressed in MZB cells and developing B- and T-cells.

The protein resides in the cytoplasm. Its subcellular location is the nucleus. The catalysed reaction is S-ubiquitinyl-[E2 ubiquitin-conjugating enzyme]-L-cysteine + [acceptor protein]-L-lysine = [E2 ubiquitin-conjugating enzyme]-L-cysteine + N(6)-ubiquitinyl-[acceptor protein]-L-lysine.. Its pathway is protein modification; protein ubiquitination. Functionally, functions as a ubiquitin ligase protein in vivo, mediating ubiquitination and promoting degradation of MEKK1, suggesting that it may regulate the Notch pathway via some ubiquitin ligase activity. Regulator of Notch signaling, a signaling pathway involved in cell-cell communications that regulates a broad spectrum of cell-fate determinations. Mainly acts as a positive regulator of Notch, but it also acts as a negative regulator, depending on the developmental and cell context. Mediates the antineural activity of Notch, possibly by inhibiting the transcriptional activation mediated by MATCH1. Involved in neurogenesis, lymphogenesis and myogenesis, and may also be involved in MZB (Marginal zone B) cell differentiation. Promotes B-cell development at the expense of T-cell development, suggesting that it can antagonize NOTCH1. The sequence is that of E3 ubiquitin-protein ligase DTX1 (DTX1) from Homo sapiens (Human).